The following is a 354-amino-acid chain: Uroporphyrinogen decarboxylase (354 aa).

Residues 27-31 (RQAGR), D77, Y154, T209, and H327 each bind substrate.

Belongs to the uroporphyrinogen decarboxylase family. As to quaternary structure, homodimer.

It is found in the cytoplasm. The catalysed reaction is uroporphyrinogen III + 4 H(+) = coproporphyrinogen III + 4 CO2. Its pathway is porphyrin-containing compound metabolism; protoporphyrin-IX biosynthesis; coproporphyrinogen-III from 5-aminolevulinate: step 4/4. Catalyzes the decarboxylation of four acetate groups of uroporphyrinogen-III to yield coproporphyrinogen-III. This chain is Uroporphyrinogen decarboxylase, found in Pseudomonas putida (strain W619).